A 165-amino-acid chain; its full sequence is MSGAMRRIGEYLGLLEDTGRYDDEYGDYAGDYETQETAPVATRSSKRESRPAPVSDLSERRRPASGPTGVVAELSRITTLHPSTYNEARTVGENFRDGTPVIMNLSEMDDADAKRLVDFAAGLVFATRGTIERITNKVFLLSPPNVSVAAEDKQRIAEGGFFNQS.

Residues 23 to 75 are disordered; that stretch reads DEYGDYAGDYETQETAPVATRSSKRESRPAPVSDLSERRRPASGPTGVVAELS.

It belongs to the SepF family. Homodimer. Interacts with FtsZ.

Its subcellular location is the cytoplasm. In terms of biological role, cell division protein that is part of the divisome complex and is recruited early to the Z-ring. Probably stimulates Z-ring formation, perhaps through the cross-linking of FtsZ protofilaments. Its function overlaps with FtsA. This is Cell division protein SepF from Nocardioides sp. (strain ATCC BAA-499 / JS614).